The primary structure comprises 143 residues: Transcription antitermination protein NusB (143 aa).

The protein belongs to the NusB family.

Functionally, involved in transcription antitermination. Required for transcription of ribosomal RNA (rRNA) genes. Binds specifically to the boxA antiterminator sequence of the ribosomal RNA (rrn) operons. The protein is Transcription antitermination protein NusB of Desulfatibacillum aliphaticivorans.